Here is a 543-residue protein sequence, read N- to C-terminus: Probable bifunctional tRNA threonylcarbamoyladenosine biosynthesis protein (543 aa).

The segment at 1 to 329 (MDISKDLICI…YRSDMVEVNW (329 aa)) is kae1. Residues His-112, His-116, and Tyr-133 each contribute to the Fe cation site. L-threonylcarbamoyladenylate contacts are provided by residues 133–137 (YVSGG), Asp-165, Gly-178, Glu-182, and Asn-262. A Fe cation-binding site is contributed by Asp-290. The Protein kinase domain occupies 342–543 (IIPEHLIGKG…KEVEKRARYL (202 aa)). ATP contacts are provided by residues 348 to 356 (IGKGAEADI) and Lys-369. Asp-461 acts as the Proton acceptor; for kinase activity in catalysis.

It in the N-terminal section; belongs to the KAE1 / TsaD family. This sequence in the C-terminal section; belongs to the protein kinase superfamily. Tyr protein kinase family. BUD32 subfamily. As to quaternary structure, component of the KEOPS complex that consists of Kae1, Bud32, Cgi121 and Pcc1; the whole complex dimerizes. Fe(2+) serves as cofactor.

It is found in the cytoplasm. It carries out the reaction L-seryl-[protein] + ATP = O-phospho-L-seryl-[protein] + ADP + H(+). The catalysed reaction is L-threonyl-[protein] + ATP = O-phospho-L-threonyl-[protein] + ADP + H(+). It catalyses the reaction L-threonylcarbamoyladenylate + adenosine(37) in tRNA = N(6)-L-threonylcarbamoyladenosine(37) in tRNA + AMP + H(+). Its function is as follows. Required for the formation of a threonylcarbamoyl group on adenosine at position 37 (t(6)A37) in tRNAs that read codons beginning with adenine. Is a component of the KEOPS complex that is probably involved in the transfer of the threonylcarbamoyl moiety of threonylcarbamoyl-AMP (TC-AMP) to the N6 group of A37. The Kae1 domain likely plays a direct catalytic role in this reaction. The Bud32 domain probably displays kinase activity that regulates Kae1 function. This chain is Probable bifunctional tRNA threonylcarbamoyladenosine biosynthesis protein, found in Methanococcus maripaludis (strain C6 / ATCC BAA-1332).